The chain runs to 364 residues: tRNA 2-selenouridine synthase (364 aa).

The region spanning 14-137 (LIADTPIIDV…LRQTAIQATI (124 aa)) is the Rhodanese domain. Residue Cys-97 is the S-selanylcysteine intermediate of the active site.

This sequence belongs to the SelU family. As to quaternary structure, monomer.

It catalyses the reaction 5-methylaminomethyl-2-thiouridine(34) in tRNA + selenophosphate + (2E)-geranyl diphosphate + H2O + H(+) = 5-methylaminomethyl-2-selenouridine(34) in tRNA + (2E)-thiogeraniol + phosphate + diphosphate. It carries out the reaction 5-methylaminomethyl-2-thiouridine(34) in tRNA + (2E)-geranyl diphosphate = 5-methylaminomethyl-S-(2E)-geranyl-thiouridine(34) in tRNA + diphosphate. The enzyme catalyses 5-methylaminomethyl-S-(2E)-geranyl-thiouridine(34) in tRNA + selenophosphate + H(+) = 5-methylaminomethyl-2-(Se-phospho)selenouridine(34) in tRNA + (2E)-thiogeraniol. The catalysed reaction is 5-methylaminomethyl-2-(Se-phospho)selenouridine(34) in tRNA + H2O = 5-methylaminomethyl-2-selenouridine(34) in tRNA + phosphate. Functionally, involved in the post-transcriptional modification of the uridine at the wobble position (U34) of tRNA(Lys), tRNA(Glu) and tRNA(Gln). Catalyzes the conversion of 2-thiouridine (S2U-RNA) to 2-selenouridine (Se2U-RNA). Acts in a two-step process involving geranylation of 2-thiouridine (S2U) to S-geranyl-2-thiouridine (geS2U) and subsequent selenation of the latter derivative to 2-selenouridine (Se2U) in the tRNA chain. The protein is tRNA 2-selenouridine synthase of Escherichia coli O6:K15:H31 (strain 536 / UPEC).